Here is a 689-residue protein sequence, read N- to C-terminus: Glycine--tRNA ligase beta subunit (689 aa).

This sequence belongs to the class-II aminoacyl-tRNA synthetase family. As to quaternary structure, tetramer of two alpha and two beta subunits.

The protein localises to the cytoplasm. It catalyses the reaction tRNA(Gly) + glycine + ATP = glycyl-tRNA(Gly) + AMP + diphosphate. The sequence is that of Glycine--tRNA ligase beta subunit from Dichelobacter nodosus (strain VCS1703A).